The primary structure comprises 245 residues: tRNA (guanine-N(1)-)-methyltransferase (245 aa).

S-adenosyl-L-methionine-binding positions include Gly-111 and 131–136; that span reads MGDYVL.

This sequence belongs to the RNA methyltransferase TrmD family. In terms of assembly, homodimer.

The protein resides in the cytoplasm. The catalysed reaction is guanosine(37) in tRNA + S-adenosyl-L-methionine = N(1)-methylguanosine(37) in tRNA + S-adenosyl-L-homocysteine + H(+). Functionally, specifically methylates guanosine-37 in various tRNAs. This Staphylococcus epidermidis (strain ATCC 35984 / DSM 28319 / BCRC 17069 / CCUG 31568 / BM 3577 / RP62A) protein is tRNA (guanine-N(1)-)-methyltransferase.